We begin with the raw amino-acid sequence, 633 residues long: MTHNFAENYDIIVVGAGHAGVEASLAASRMGCKTLLATINLEMLAFMPCNPSIGGSAKGIVVREIDALGGEMGKNIDKTYIQMKMLNTGKGPAVRALRAQADKALYAQTMKQTVEKQENLTLRQAMIDEILVEDGKVVGVRTATNQKFSAKSVVITTGTALRGEIILGDLKYSSGPNNSLASVTLADNLRDLGLEIGRFKTGTPPRVKASSINYEKTEIQPGDEQPNHFSFMSRDEDYITDQVPCWLTYTNTLSHDIINQNLHRAPMFSGIVKGVGPRYCPSIEDKIVRFADKERHQLFLEPEGRYTEEVYVQGLSTSLPEDVQVDLLRSIKGLENAEMMRTGYAIEYDIVLPHQLRATLETKVIAGLFTAGQTNGTSGYEEAAGQGLVAGINAALKVQGKPELILKRSDAYIGVMIDDLVTKGTLEPYRLLTSRAEYRLILRHDNADMRLTEIGYEIGLVDEERYAIFKKRQMQFENELERLDSIKLKPVSETNKRIQELGFKPLTDALTAKEFMRRPQITYAVATDFVGCADEPLDSKVIELLETEIKYEGYIKKALDQVAKMKRMEEKRIPPHIDWDDIDSIATEARQKFKKINPETLGQASRISGVNPADISILMVYLEGRQKGRKNIN.

Residues 15–20, I127, and S182 contribute to the FAD site; that span reads GAGHAG. 276–290 contributes to the NAD(+) binding site; that stretch reads GPRYCPSIEDKIVRF. FAD is bound at residue Q373.

The protein belongs to the MnmG family. As to quaternary structure, homodimer. Heterotetramer of two MnmE and two MnmG subunits. The cofactor is FAD.

It is found in the cytoplasm. In terms of biological role, NAD-binding protein involved in the addition of a carboxymethylaminomethyl (cmnm) group at the wobble position (U34) of certain tRNAs, forming tRNA-cmnm(5)s(2)U34. The polypeptide is tRNA uridine 5-carboxymethylaminomethyl modification enzyme MnmG (Streptococcus agalactiae serotype III (strain NEM316)).